The sequence spans 145 residues: MAEHYGQQQQTRAPHLQLQPRAQRVVKAATAVTAGGSLLVLSGLTLAGTVIALTIATPLLVIFSPVLVPAVITIFLLGAGFLASGGFGVAALSVLSWIYRYLTGKHPPGADQLESAKTKLASKAREMKDRAEQFSQQPVAGSQTS.

N-acetylalanine is present on A2. 2 helical membrane passes run 36-56 (GSLL…LTIA) and 59-79 (LLVI…LLGA). Residues 58-69 (PLLVIFSPVLVP) carry the Proline-knot motif. Residues 123-132 (KAREMKDRAE) show a composition bias toward basic and acidic residues. The disordered stretch occupies residues 123 to 145 (KAREMKDRAEQFSQQPVAGSQTS). Over residues 133 to 145 (QFSQQPVAGSQTS) the composition is skewed to polar residues.

This sequence belongs to the oleosin family. Expressed in seeds (at protein level).

It is found in the lipid droplet. Its subcellular location is the membrane. Its function is as follows. May have a structural role to stabilize the lipid body during desiccation of the seed by preventing coalescence of the oil. Probably interacts with both lipid and phospholipid moieties of lipid bodies. May also provide recognition signals for specific lipase anchorage in lipolysis during seedling growth. The polypeptide is Oleosin L (Sesamum indicum (Oriental sesame)).